The primary structure comprises 126 residues: MPKKAGATSKGKNQTKEPETAPPAAGPVATDPKGFVTIAIHAKPGSRQNAVTDLSTEAVGVAIAAPPSEGEANAELCRYLSKVLDLRKSDVVLDKGGKSREKVVKLLASTTPEEVLEKLKTEAEKK.

The interval 1 to 32 (MPKKAGATSKGKNQTKEPETAPPAAGPVATDP) is disordered. The residue at position 89 (serine 89) is a Phosphoserine.

This sequence belongs to the UPF0235 family.

The polypeptide is UPF0235 protein C15orf40 homolog (Mus musculus (Mouse)).